The sequence spans 491 residues: Putative F-box/LRR-repeat protein At3g59230 (491 aa).

One can recognise an F-box domain in the interval 11–57 (KDIINSLPEALIYHILSFLSTKEAAITSLLSRKWRYFFAFVPNLDFD). 7 LRR repeats span residues 127–154 (LSIASDTTYLFPSKVFVSKSLVRLRIEA), 156–182 (NGLAFGSLVIDVGDVSLPKLKTLYLDS), 184–209 (ELDYQIICLAKLLSGCHVLEELVMID), 325–351 (ASTVEVLTFRCKAIPIFNNLTRLTIES), 352–377 (NTKVGWDSLPNLLKNCPNLKTLVFQG), 419–444 (NDKTELEQTKHFLELMPHLEQLNIYY), and 472–491 (VQVISDNLTLSVTLPSSSSI).

This Arabidopsis thaliana (Mouse-ear cress) protein is Putative F-box/LRR-repeat protein At3g59230.